A 694-amino-acid polypeptide reads, in one-letter code: Elongation factor G (694 aa).

A tr-type G domain is found at 6-288; the sequence is KLYRNIGIAA…GVIEYLPSPT (283 aa). Residues 15 to 22, 86 to 90, and 140 to 143 each bind GTP; these read AHVDAGKT, DTPGH, and NKMD.

It belongs to the TRAFAC class translation factor GTPase superfamily. Classic translation factor GTPase family. EF-G/EF-2 subfamily.

It localises to the cytoplasm. In terms of biological role, catalyzes the GTP-dependent ribosomal translocation step during translation elongation. During this step, the ribosome changes from the pre-translocational (PRE) to the post-translocational (POST) state as the newly formed A-site-bound peptidyl-tRNA and P-site-bound deacylated tRNA move to the P and E sites, respectively. Catalyzes the coordinated movement of the two tRNA molecules, the mRNA and conformational changes in the ribosome. This is Elongation factor G from Legionella pneumophila (strain Paris).